Here is a 739-residue protein sequence, read N- to C-terminus: Phosphoribosylformylglycinamidine synthase subunit PurL (739 aa).

Residue histidine 52 is part of the active site. Tyrosine 55 and lysine 94 together coordinate ATP. Glutamate 96 is a Mg(2+) binding site. Residues 97 to 100 (SHNH) and arginine 119 each bind substrate. Histidine 98 acts as the Proton acceptor in catalysis. Residue aspartate 120 coordinates Mg(2+). Residue glutamine 243 participates in substrate binding. Aspartate 271 is a binding site for Mg(2+). Residue 315–317 (ESQ) coordinates substrate. Residues aspartate 498 and glycine 535 each coordinate ATP. Asparagine 536 serves as a coordination point for Mg(2+). Residue serine 538 coordinates substrate.

The protein belongs to the FGAMS family. As to quaternary structure, monomer. Part of the FGAM synthase complex composed of 1 PurL, 1 PurQ and 2 PurS subunits.

The protein resides in the cytoplasm. It carries out the reaction N(2)-formyl-N(1)-(5-phospho-beta-D-ribosyl)glycinamide + L-glutamine + ATP + H2O = 2-formamido-N(1)-(5-O-phospho-beta-D-ribosyl)acetamidine + L-glutamate + ADP + phosphate + H(+). Its pathway is purine metabolism; IMP biosynthesis via de novo pathway; 5-amino-1-(5-phospho-D-ribosyl)imidazole from N(2)-formyl-N(1)-(5-phospho-D-ribosyl)glycinamide: step 1/2. Part of the phosphoribosylformylglycinamidine synthase complex involved in the purines biosynthetic pathway. Catalyzes the ATP-dependent conversion of formylglycinamide ribonucleotide (FGAR) and glutamine to yield formylglycinamidine ribonucleotide (FGAM) and glutamate. The FGAM synthase complex is composed of three subunits. PurQ produces an ammonia molecule by converting glutamine to glutamate. PurL transfers the ammonia molecule to FGAR to form FGAM in an ATP-dependent manner. PurS interacts with PurQ and PurL and is thought to assist in the transfer of the ammonia molecule from PurQ to PurL. The protein is Phosphoribosylformylglycinamidine synthase subunit PurL of Caulobacter vibrioides (strain ATCC 19089 / CIP 103742 / CB 15) (Caulobacter crescentus).